The following is a 511-amino-acid chain: Neuronal acetylcholine receptor subunit alpha-2 (511 aa).

The first 27 residues, 1 to 27, serve as a signal peptide directing secretion; sequence MTLSHSALQFWTHLYLWCLLLVPAVLT. The Extracellular portion of the chain corresponds to 28–241; it reads QQGSHTHAED…VTYYFVIRRL (214 aa). Asparagine 56 and asparagine 106 each carry an N-linked (GlcNAc...) asparagine glycan. A disulfide bond links cysteine 160 and cysteine 174. Asparagine 212 carries an N-linked (GlcNAc...) asparagine glycan. Cysteine 224 and cysteine 225 are joined by a disulfide. Transmembrane regions (helical) follow at residues 242-266, 274-292, and 308-329; these read PLFY…VFYL, ITLC…LLIT, and YLLF…VLNV. The Cytoplasmic segment spans residues 330-484; the sequence is HHRSPSTHNM…WKYVAMVVDR (155 aa). Residues 485 to 503 form a helical membrane-spanning segment; it reads IFLWLFIIVCFLGTIGLFL.

This sequence belongs to the ligand-gated ion channel (TC 1.A.9) family. Acetylcholine receptor (TC 1.A.9.1) subfamily. Alpha-2/CHRNA2 sub-subfamily. Neuronal AChR seems to be composed of two different types of subunits: alpha and non-alpha (beta). CHRNA2/Alpha-2 subunit can be combined to CHRNB2/beta-2 or CHRNB4/beta-4 to give rise to functional receptors. The alpha-2:beta-2 nAChR complex is proposed to be a heteropentamer with two subtypes: LS (low agonist sensitivity) with a (alpha-2)3:(beta-2)2 and HS (high agonist sensitivity) with a (alpha-2)2:(beta-2)3 stoichiometry; the subtypes differ in their subunit binding interfaces which are involved in ligand binding.

It is found in the synaptic cell membrane. Its subcellular location is the cell membrane. It carries out the reaction Ca(2+)(in) = Ca(2+)(out). The catalysed reaction is K(+)(in) = K(+)(out). It catalyses the reaction Na(+)(in) = Na(+)(out). Component of neuronal acetylcholine receptors (nAChRs) that function as pentameric, ligand-gated cation channels with high calcium permeability among other activities. nAChRs are excitatory neurotrasnmitter receptors formed by a collection of nAChR subunits known to mediate synaptic transmission in the nervous system and the neuromuscular junction. Each nAchR subunit confers differential attributes to channel properties, including activation, deactivation and desensitization kinetics, pH sensitivity, cation permeability, and binding to allosteric modulators. CHRNA2 forms heteropentameric neuronal acetylcholine receptors with CHRNB2 and CHRNB4 and plays a role in nicotine dependence. This is Neuronal acetylcholine receptor subunit alpha-2 (Chrna2) from Rattus norvegicus (Rat).